Consider the following 278-residue polypeptide: Extracellular metalloprotease MCYG_03238 (278 aa).

An N-terminal signal peptide occupies residues 1 to 19 (MRFSIVLSSIAALSSVAAA). A glycan (N-linked (GlcNAc...) asparagine) is linked at Asn-52. Residue His-170 participates in Zn(2+) binding. Residue Glu-171 is part of the active site. Zn(2+) is bound at residue His-174. Cys-209 and Cys-255 are disulfide-bonded.

It belongs to the peptidase M43B family.

The protein localises to the secreted. Secreted metalloproteinase that allows assimilation of proteinaceous substrates. Plays a pivotal role as a pathogenicity determinant during infections and contributes to the ability of the pathogen to persist within the mammalian host. The protein is Extracellular metalloprotease MCYG_03238 of Arthroderma otae (strain ATCC MYA-4605 / CBS 113480) (Microsporum canis).